The following is a 537-amino-acid chain: Atrial natriuretic peptide receptor 3 (537 aa).

The signal sequence occupies residues 1–20 (MPSLLVLTFSACVLLGWALL). Positions 21-41 (ADCTGGGGSGGAGPGRGRRER) are excised as a propeptide. The Extracellular portion of the chain corresponds to 42-477 (EALPPQKIEV…PCKASGGLEE (436 aa)). Asn-82 carries an N-linked (GlcNAc...) asparagine glycan. Cystine bridges form between Cys-104/Cys-132 and Cys-209/Cys-257. Residues Asn-289 and Asn-390 are each glycosylated (N-linked (GlcNAc...) asparagine). The chain crosses the membrane as a helical span at residues 478–500 (SAVTGIVVGALLGAGLLMAFYFF). Topologically, residues 501–537 (RKKYRITIERRNQQEESNVGKHRELREDSIRSHFSVA) are cytoplasmic.

Belongs to the ANF receptor family. As to quaternary structure, homodimer; disulfide-linked. Interacts with OSTN.

The protein resides in the cell membrane. Its function is as follows. Receptor for the natriuretic peptide hormones, binding with similar affinities atrial natriuretic peptide NPPA/ANP, brain natriuretic peptide NPPB/BNP, and C-type natriuretic peptide NPPC/CNP. May function as a clearance receptor for NPPA, NPPB and NPPC, regulating their local concentrations and effects. Acts as a regulator of osteoblast differentiation and bone growth by binding to its ligand osteocrin, thereby preventing binding between NPR3/NPR-C and natriuretic peptides, leading to increase cGMP production. The polypeptide is Atrial natriuretic peptide receptor 3 (NPR3) (Bos taurus (Bovine)).